A 350-amino-acid polypeptide reads, in one-letter code: Very-long-chain 3-oxoacyl-CoA reductase (350 aa).

The chain crosses the membrane as a helical span at residues 20–40 (ALLFSLLFGVFKLTTFTLRFA). Positions 66, 120, 147, 221, 225, 254, and 256 each coordinate NADP(+). Residue Tyr-221 is the Proton donor of the active site. The active-site Lowers pKa of active site Tyr is the Lys-225.

It belongs to the short-chain dehydrogenases/reductases (SDR) family.

Its subcellular location is the endoplasmic reticulum membrane. The enzyme catalyses a very-long-chain (3R)-3-hydroxyacyl-CoA + NADP(+) = a very-long-chain 3-oxoacyl-CoA + NADPH + H(+). It functions in the pathway lipid metabolism; fatty acid biosynthesis. In terms of biological role, component of the microsomal membrane bound fatty acid elongation system, which produces the 26-carbon very long-chain fatty acids (VLCFA) from palmitate. Catalyzes the reduction of the 3-ketoacyl-CoA intermediate that is formed in each cycle of fatty acid elongation. VLCFAs serve as precursors for ceramide and sphingolipids. The sequence is that of Very-long-chain 3-oxoacyl-CoA reductase from Lodderomyces elongisporus (strain ATCC 11503 / CBS 2605 / JCM 1781 / NBRC 1676 / NRRL YB-4239) (Yeast).